The primary structure comprises 132 residues: Aspartate 1-decarboxylase (132 aa).

The active-site Schiff-base intermediate with substrate; via pyruvic acid is the S25. Position 25 is a pyruvic acid (Ser) (S25). T57 is a binding site for substrate. Residue Y58 is the Proton donor of the active site. Residue 73 to 75 coordinates substrate; the sequence is GAA.

It belongs to the PanD family. Heterooctamer of four alpha and four beta subunits. Pyruvate serves as cofactor. Post-translationally, is synthesized initially as an inactive proenzyme, which is activated by self-cleavage at a specific serine bond to produce a beta-subunit with a hydroxyl group at its C-terminus and an alpha-subunit with a pyruvoyl group at its N-terminus.

The protein localises to the cytoplasm. It carries out the reaction L-aspartate + H(+) = beta-alanine + CO2. The protein operates within cofactor biosynthesis; (R)-pantothenate biosynthesis; beta-alanine from L-aspartate: step 1/1. Catalyzes the pyruvoyl-dependent decarboxylation of aspartate to produce beta-alanine. This chain is Aspartate 1-decarboxylase, found in Geotalea uraniireducens (strain Rf4) (Geobacter uraniireducens).